The chain runs to 123 residues: Glycine cleavage system H protein (123 aa).

The Lipoyl-binding domain occupies 23–104; sequence HWLAGITDHA…PYDAWIFSFE (82 aa). K64 carries the post-translational modification N6-lipoyllysine.

This sequence belongs to the GcvH family. As to quaternary structure, the glycine cleavage system is composed of four proteins: P, T, L and H. (R)-lipoate serves as cofactor.

Functionally, the glycine cleavage system catalyzes the degradation of glycine. The H protein shuttles the methylamine group of glycine from the P protein to the T protein. The sequence is that of Glycine cleavage system H protein from Methylobacillus flagellatus (strain ATCC 51484 / DSM 6875 / VKM B-1610 / KT).